The following is a 311-amino-acid chain: Malate dehydrogenase (311 aa).

NAD(+) is bound by residues 7-12 (GAGNVG) and Asp-32. The substrate site is built by Arg-82 and Arg-88. NAD(+)-binding positions include Asn-95 and 118–120 (VSN). Substrate is bound by residues Asn-120 and Arg-151. His-175 serves as the catalytic Proton acceptor.

The protein belongs to the LDH/MDH superfamily. MDH type 3 family. In terms of assembly, homotetramer.

It carries out the reaction (S)-malate + NAD(+) = oxaloacetate + NADH + H(+). With respect to regulation, strongly inhibited by iodoacetic acid and CuCl(2). Completely inhibited by N-ethylmaleimide and HgCl(2). Catalyzes the reversible oxidation of malate to oxaloacetate. Can use both NAD and NADP for malate oxidation, but NADPH cannot be used for oxaloacetate reduction. The polypeptide is Malate dehydrogenase (Flavobacterium frigidimaris).